A 289-amino-acid chain; its full sequence is Heme oxygenase 1 (289 aa).

Over residues 1–12 (MERPQPDSSMPQ) the composition is skewed to polar residues. The interval 1-24 (MERPQPDSSMPQDLSEALKEATKE) is disordered. Residues 1-266 (MERPQPDSSM…KPQPSVLSQA (266 aa)) are Cytoplasmic-facing. 4 residues coordinate heme b: Lys-19, His-26, Tyr-135, and Arg-184. The disordered stretch occupies residues 239-261 (RRAGSKVQDLAPTKASRGKPQPS). Ser-243 is subject to Phosphoserine. A helical; Anchor for type IV membrane protein transmembrane segment spans residues 267–289 (PLLRWVLTLSFLVATVAVGLYAM).

The protein belongs to the heme oxygenase family. As to quaternary structure, homodimer and higher order homooligomer. Oligomerization is crucial for its stability and function in the endoplasmic reticulum. Interacts with FLVCR2; this interaction is potentiated in the presence of heme. In terms of processing, a soluble form arises by proteolytic removal of the membrane anchor.

It is found in the endoplasmic reticulum membrane. The enzyme catalyses heme b + 3 reduced [NADPH--hemoprotein reductase] + 3 O2 = biliverdin IXalpha + CO + Fe(2+) + 3 oxidized [NADPH--hemoprotein reductase] + 3 H2O + H(+). With respect to regulation, inhibited by metalloporphyrins such as Sn-, Co-, Mn- and Zn-protoporphyrins. In terms of biological role, catalyzes the oxidative cleavage of heme at the alpha-methene bridge carbon, released as carbon monoxide (CO), to generate biliverdin IXalpha, while releasing the central heme iron chelate as ferrous iron. Affords protection against programmed cell death and this cytoprotective effect relies on its ability to catabolize free heme and prevent it from sensitizing cells to undergo apoptosis. Catalyzes the oxidative cleavage of heme at the alpha-methene bridge carbon, released as carbon monoxide (CO), to generate biliverdin IXalpha, while releasing the central heme iron chelate as ferrous iron. In Bos taurus (Bovine), this protein is Heme oxygenase 1 (HMOX1).